The following is a 142-amino-acid chain: Large ribosomal subunit protein uL11 (142 aa).

It belongs to the universal ribosomal protein uL11 family. As to quaternary structure, part of the ribosomal stalk of the 50S ribosomal subunit. Interacts with L10 and the large rRNA to form the base of the stalk. L10 forms an elongated spine to which L12 dimers bind in a sequential fashion forming a multimeric L10(L12)X complex. In terms of processing, one or more lysine residues are methylated.

Its function is as follows. Forms part of the ribosomal stalk which helps the ribosome interact with GTP-bound translation factors. This Shewanella sp. (strain W3-18-1) protein is Large ribosomal subunit protein uL11.